The sequence spans 285 residues: NADPH-dependent 7-cyano-7-deazaguanine reductase (285 aa).

80-82 (VES) is a binding site for substrate. 82–83 (SK) is a binding site for NADPH. The active-site Thioimide intermediate is the Cys191. Asp198 serves as the catalytic Proton donor. 231–232 (HE) is a substrate binding site. Residue 260–261 (RG) coordinates NADPH.

This sequence belongs to the GTP cyclohydrolase I family. QueF type 2 subfamily. Homodimer.

Its subcellular location is the cytoplasm. It carries out the reaction 7-aminomethyl-7-carbaguanine + 2 NADP(+) = 7-cyano-7-deazaguanine + 2 NADPH + 3 H(+). It participates in tRNA modification; tRNA-queuosine biosynthesis. In terms of biological role, catalyzes the NADPH-dependent reduction of 7-cyano-7-deazaguanine (preQ0) to 7-aminomethyl-7-deazaguanine (preQ1). The protein is NADPH-dependent 7-cyano-7-deazaguanine reductase of Psychrobacter cryohalolentis (strain ATCC BAA-1226 / DSM 17306 / VKM B-2378 / K5).